A 294-amino-acid chain; its full sequence is 4-hydroxy-tetrahydrodipicolinate synthase (294 aa).

Residue Thr47 participates in pyruvate binding. Residue Tyr135 is the Proton donor/acceptor of the active site. Lys163 functions as the Schiff-base intermediate with substrate in the catalytic mechanism. Ile206 serves as a coordination point for pyruvate.

It belongs to the DapA family. As to quaternary structure, homodimer.

It is found in the cytoplasm. It carries out the reaction L-aspartate 4-semialdehyde + pyruvate = (2S,4S)-4-hydroxy-2,3,4,5-tetrahydrodipicolinate + H2O + H(+). It functions in the pathway amino-acid biosynthesis; L-lysine biosynthesis via DAP pathway; (S)-tetrahydrodipicolinate from L-aspartate: step 3/4. Catalyzes the condensation of (S)-aspartate-beta-semialdehyde [(S)-ASA] and pyruvate to 4-hydroxy-tetrahydrodipicolinate (HTPA). This Staphylococcus epidermidis (strain ATCC 35984 / DSM 28319 / BCRC 17069 / CCUG 31568 / BM 3577 / RP62A) protein is 4-hydroxy-tetrahydrodipicolinate synthase.